We begin with the raw amino-acid sequence, 94 residues long: Co-chaperonin GroES (94 aa).

This sequence belongs to the GroES chaperonin family. As to quaternary structure, heptamer of 7 subunits arranged in a ring. Interacts with the chaperonin GroEL.

The protein resides in the cytoplasm. Its function is as follows. Together with the chaperonin GroEL, plays an essential role in assisting protein folding. The GroEL-GroES system forms a nano-cage that allows encapsulation of the non-native substrate proteins and provides a physical environment optimized to promote and accelerate protein folding. GroES binds to the apical surface of the GroEL ring, thereby capping the opening of the GroEL channel. This is Co-chaperonin GroES from Halalkalibacterium halodurans (strain ATCC BAA-125 / DSM 18197 / FERM 7344 / JCM 9153 / C-125) (Bacillus halodurans).